We begin with the raw amino-acid sequence, 362 residues long: Mortality factor 4-like protein 1 (362 aa).

The 40-residue stretch at 12 to 51 (QEGERVLCFHGPLLYEAKCVKVAIKDKQVKYFIHYSGWNK) folds into the Tudor-knot domain. An interaction with KAT8 region spans residues 26-62 (YEAKCVKVAIKDKQVKYFIHYSGWNKKSAVRPRRSEK). Residues 113 to 182 (RELQKANQEQ…RKKRARVDPT (70 aa)) form a disordered region. The segment at 133-266 (PGKKTSGLQQ…VAGIKEYFNV (134 aa)) is sufficient for interaction with SIN3A. Positions 135–146 (KKTSGLQQKNVE) match the Nuclear localization signal motif. An N6-acetyllysine modification is found at Lys143. The interval 164–230 (STSETPQPPR…FYLPAKKNVD (67 aa)) is interaction with RB1-1. Residues 188–342 (TFMNRVEVKV…FLKYLAKNSA (155 aa)) form a sufficient for interaction with PHF12 region. Residues 191–362 (NRVEVKVKIP…APPEYHRKAV (172 aa)) form the MRG domain. The tract at residues 323–344 (LALLLNYLHDFLKYLAKNSATL) is interaction with RB1-2.

Component of the NuA4 histone acetyltransferase complex which contains the catalytic subunit KAT5/TIP60 and the subunits EP400, TRRAP/PAF400, BRD8/SMAP, EPC1, DMAP1/DNMAP1, RUVBL1/TIP49, RUVBL2, ING3, actin, ACTL6A/BAF53A, MORF4L1/MRG15, MORF4L2/MRGX, MRGBP, YEATS4/GAS41, VPS72/YL1 and MEAF6. The NuA4 complex interacts with MYC and the adenovirus E1A protein. MORF4L1 may also participate in the formation of NuA4 related complexes which lack the KAT5/TIP60 catalytic subunit, but which include the SWI/SNF related protein SRCAP. Component of the mSin3A histone deacetylase complex, which includes SIN3A, HDAC2, ARID4B, MORF4L1, RBBP4/RbAp48, and RBBP7/RbAp46. May also interact with PHF12 and one or more as yet undefined members of the TLE (transducin-like enhancer of split) family of transcriptional repressors. Component of the SIN3B complex, which includes SIN3B, HDAC2 or HDAC1, PHF12 and MORF4L1. Interacts with RB1 and KAT8. Interacts with the N-terminus of MRFAP1. Found in a complex composed of MORF4L1, MRFAP1 and RB1. Interacts with the entire BRCA complex, which contains BRCA1, PALB2, BRCA2 and RAD51. Interacts with PALB2. Forms a complex with MSL1 and NUPR1.

It localises to the nucleus. Functionally, component of the NuA4 histone acetyltransferase (HAT) complex which is involved in transcriptional activation of select genes principally by acetylation of nucleosomal histones H4 and H2A. This modification may both alter nucleosome - DNA interactions and promote interaction of the modified histones with other proteins which positively regulate transcription. This complex may be required for the activation of transcriptional programs associated with oncogene and proto-oncogene mediated growth induction, tumor suppressor mediated growth arrest and replicative senescence, apoptosis, and DNA repair. The NuA4 complex ATPase and helicase activities seem to be, at least in part, contributed by the association of RUVBL1 and RUVBL2 with EP400. NuA4 may also play a direct role in DNA repair when directly recruited to sites of DNA damage. As part of the SIN3B complex represses transcription and counteracts the histone acetyltransferase activity of EP300 through the recognition H3K27ac marks by PHF12 and the activity of the histone deacetylase HDAC2. SIN3B complex is recruited downstream of the constitutively active genes transcriptional start sites through interaction with histones and mitigates histone acetylation and RNA polymerase II progression within transcribed regions contributing to the regulation of transcription. Required for homologous recombination repair (HRR) and resistance to mitomycin C (MMC). Involved in the localization of PALB2, BRCA2 and RAD51, but not BRCA1, to DNA-damage foci. The sequence is that of Mortality factor 4-like protein 1 (Morf4l1) from Mus musculus (Mouse).